A 627-amino-acid polypeptide reads, in one-letter code: DNA mismatch repair protein MutL (627 aa).

The protein belongs to the DNA mismatch repair MutL/HexB family.

Its function is as follows. This protein is involved in the repair of mismatches in DNA. It is required for dam-dependent methyl-directed DNA mismatch repair. May act as a 'molecular matchmaker', a protein that promotes the formation of a stable complex between two or more DNA-binding proteins in an ATP-dependent manner without itself being part of a final effector complex. The chain is DNA mismatch repair protein MutL from Mesorhizobium japonicum (strain LMG 29417 / CECT 9101 / MAFF 303099) (Mesorhizobium loti (strain MAFF 303099)).